Consider the following 622-residue polypeptide: Polypeptide N-acetylgalactosaminyltransferase 6 (622 aa).

Over 1–8 (MRLLRRRH) the chain is Cytoplasmic. A helical; Signal-anchor for type II membrane protein membrane pass occupies residues 9-28 (MAVRLVMVGSAFVLFLFILQ). The Lumenal portion of the chain corresponds to 29 to 622 (RDVSGREQAT…SDPHQHWLFI (594 aa)). N-linked (GlcNAc...) asparagine glycosylation occurs at N86. The segment at 103-135 (WERPPQDPNGPGADGKAFQKKEWTPQETQEKEE) is disordered. Positions 119–135 (AFQKKEWTPQETQEKEE) are enriched in basic and acidic residues. Residues 176–285 (LPATSVIIVF…HGWLEPLLAR (110 aa)) are catalytic subdomain A. 3 residues coordinate Mn(2+): D269, H271, and H407. The segment at 348-410 (PIKSPTFAGG…PCSVVGHVFR (63 aa)) is catalytic subdomain B. Residue N476 is glycosylated (N-linked (GlcNAc...) asparagine). A Ricin B-type lectin domain is found at 507–622 (DHCLDVGENN…SDPHQHWLFI (116 aa)). A disulfide bond links C509 and C527. The UDP-N-acetyl-alpha-D-galactosamine site is built by D511, E514, H528, and N533. Disulfide bonds link C553–C566 and C597–C610.

The protein belongs to the glycosyltransferase 2 family. GalNAc-T subfamily. It depends on Mn(2+) as a cofactor.

Its subcellular location is the golgi apparatus membrane. The catalysed reaction is L-seryl-[protein] + UDP-N-acetyl-alpha-D-galactosamine = a 3-O-[N-acetyl-alpha-D-galactosaminyl]-L-seryl-[protein] + UDP + H(+). It carries out the reaction L-threonyl-[protein] + UDP-N-acetyl-alpha-D-galactosamine = a 3-O-[N-acetyl-alpha-D-galactosaminyl]-L-threonyl-[protein] + UDP + H(+). The protein operates within protein modification; protein glycosylation. Functionally, catalyzes the initial reaction in O-linked oligosaccharide biosynthesis, the transfer of an N-acetyl-D-galactosamine residue to a serine or threonine residue on the protein receptor. May participate in synthesis of oncofetal fibronectin. Has activity toward MUC1A, MUC2, EA2 and fibronectin peptides. This is Polypeptide N-acetylgalactosaminyltransferase 6 (GALNT6) from Bos taurus (Bovine).